A 325-amino-acid chain; its full sequence is MATH domain and coiled-coil domain-containing protein At3g58340 (325 aa).

Positions 6–131 (DKKFCWEIKN…NGQVMIVAEV (126 aa)) constitute an MATH domain. Residues 266–315 (KVDWLEKKLDHVKEKKEKEQSGLIILQGIEQQLHELMHKCEKKKSEVLSV) are a coiled coil.

This Arabidopsis thaliana (Mouse-ear cress) protein is MATH domain and coiled-coil domain-containing protein At3g58340.